We begin with the raw amino-acid sequence, 230 residues long: Porin OmpL (230 aa).

The signal sequence occupies residues 1 to 20 (MKSLNTLVILTSVISTSVFA).

Belongs to the oligogalacturonate-specific porin KdgM (TC 1.B.35) family. OmpL subfamily.

The protein localises to the cell outer membrane. Its function is as follows. Outer membrane channel protein that allows an efficient diffusion of low-molecular-weight solutes such as small sugars and tetraglycine. However, the specific substrate recognized by the OmpL channel is unknown. In Salmonella paratyphi A (strain ATCC 9150 / SARB42), this protein is Porin OmpL (ompL).